The primary structure comprises 1261 residues: Rho GTPase-activating protein 29 (1261 aa).

4 positions are modified to phosphoserine: serine 171, serine 176, serine 179, and serine 190. Residues 192-462 (LELDNVLLKN…SAKLYDPGQE (271 aa)) form the F-BAR domain. The stretch at 296-418 (RKNEMEKQRK…EILAQLRTLV (123 aa)) forms a coiled coil. Residues 481–501 (NVNKHLNSSQPSGFGPANSLE) are disordered. Residues serine 499, serine 519, and serine 552 each carry the phosphoserine modification. Low complexity predominate over residues 541-559 (SESTGGSSESRSLDSESIS). Positions 541–600 (SESTGGSSESRSLDSESISPGDFHRKLPRTPSSGTMSSADDLDEREPPSPSETGPNSLGT) are disordered. The Phorbol-ester/DAG-type zinc-finger motif lies at 612–657 (THKFRKLRSPTKCRDCEGIVVFQGVECEECLLVCHRKCLENLVIIC). The Rho-GAP domain occupies 671-886 (AEFTQVAKKE…FLITYSQKIF (216 aa)). A phosphoserine mark is found at serine 913 and serine 949. A disordered region spans residues 981 to 1011 (SASQKIEDGKTPKPLSLKSDRSTNNVERHTP). Positions 998-1010 (KSDRSTNNVERHT) are enriched in basic and acidic residues. 3 positions are modified to phosphoserine: serine 1019, serine 1144, and serine 1146. Disordered stretches follow at residues 1117 to 1153 (HSINATQPSKPYAEPVRSVREASERRSSDSYPLAPVR) and 1178 to 1238 (GNEE…VNPM). Positions 1133–1144 (RSVREASERRSS) are enriched in basic and acidic residues. Positions 1258 to 1261 (PQFV) are interaction with PTPN13/PTPL1.

As to quaternary structure, interacts with PTPN13/PTPL1. Interacts with RAP2A via its coiled coil domain. Interacts with RASIP1. Widely expressed. Highly expressed in skeletal muscle and heart. Expressed at intermediate level in placenta, liver and pancreas. Weakly expressed in brain, lung and kidney.

Its function is as follows. GTPase activator for the Rho-type GTPases by converting them to an inactive GDP-bound state. Has strong activity toward RHOA, and weaker activity toward RAC1 and CDC42. May act as a specific effector of RAP2A to regulate Rho. In concert with RASIP1, suppresses RhoA signaling and dampens ROCK and MYH9 activities in endothelial cells and plays an essential role in blood vessel tubulogenesis. This is Rho GTPase-activating protein 29 (ARHGAP29) from Homo sapiens (Human).